The sequence spans 261 residues: 5'-nucleotidase SurE (261 aa).

A divalent metal cation is bound by residues Asp-8, Asp-9, Ser-39, and Asn-91.

Belongs to the SurE nucleotidase family. A divalent metal cation is required as a cofactor.

It localises to the cytoplasm. The catalysed reaction is a ribonucleoside 5'-phosphate + H2O = a ribonucleoside + phosphate. Nucleotidase that shows phosphatase activity on nucleoside 5'-monophosphates. In Polaromonas sp. (strain JS666 / ATCC BAA-500), this protein is 5'-nucleotidase SurE.